Here is a 455-residue protein sequence, read N- to C-terminus: UDP-N-acetylmuramoylalanine--D-glutamate ligase (455 aa).

Glycine 112–threonine 118 is a binding site for ATP.

Belongs to the MurCDEF family.

The protein resides in the cytoplasm. The enzyme catalyses UDP-N-acetyl-alpha-D-muramoyl-L-alanine + D-glutamate + ATP = UDP-N-acetyl-alpha-D-muramoyl-L-alanyl-D-glutamate + ADP + phosphate + H(+). Its pathway is cell wall biogenesis; peptidoglycan biosynthesis. In terms of biological role, cell wall formation. Catalyzes the addition of glutamate to the nucleotide precursor UDP-N-acetylmuramoyl-L-alanine (UMA). The polypeptide is UDP-N-acetylmuramoylalanine--D-glutamate ligase (Trichormus variabilis (strain ATCC 29413 / PCC 7937) (Anabaena variabilis)).